A 205-amino-acid chain; its full sequence is Large ribosomal subunit protein uL4 (205 aa).

The segment at 45-97 is disordered; sequence RQGTSAVKNRSAVRGGGKKPWRQKGTGRARQGSIRAPQWRGGGTVFGPTPRSY. A compositionally biased stretch (basic residues) spans 60–71; it reads GGKKPWRQKGTG.

This sequence belongs to the universal ribosomal protein uL4 family. Part of the 50S ribosomal subunit.

One of the primary rRNA binding proteins, this protein initially binds near the 5'-end of the 23S rRNA. It is important during the early stages of 50S assembly. It makes multiple contacts with different domains of the 23S rRNA in the assembled 50S subunit and ribosome. Its function is as follows. Forms part of the polypeptide exit tunnel. The sequence is that of Large ribosomal subunit protein uL4 from Lactobacillus gasseri (strain ATCC 33323 / DSM 20243 / BCRC 14619 / CIP 102991 / JCM 1131 / KCTC 3163 / NCIMB 11718 / NCTC 13722 / AM63).